Reading from the N-terminus, the 242-residue chain is MVPWLEPGEPFPDTRLALTDPDGLLAAGSDLSPDTLLRAYSTGIFPWYDAESQPILWWSPAPRCVIQLEQLHVSRSLARHLRRADFTVTFDRAFETVMRTCAAPRQDEAGTWISEDMLAAYCRLHELGYAHSVEIWQNGALAGCLYGIQLGQMFFGESMASPQRNGSKVALVALRNFARKLDIQLLDAQIENPHLMSMGAEMMPRSAFEAHLQRWIPSQPAPSHWPGDRFDWPDLQAAHQAF.

This sequence belongs to the L/F-transferase family.

The protein localises to the cytoplasm. It carries out the reaction N-terminal L-lysyl-[protein] + L-leucyl-tRNA(Leu) = N-terminal L-leucyl-L-lysyl-[protein] + tRNA(Leu) + H(+). The catalysed reaction is N-terminal L-arginyl-[protein] + L-leucyl-tRNA(Leu) = N-terminal L-leucyl-L-arginyl-[protein] + tRNA(Leu) + H(+). The enzyme catalyses L-phenylalanyl-tRNA(Phe) + an N-terminal L-alpha-aminoacyl-[protein] = an N-terminal L-phenylalanyl-L-alpha-aminoacyl-[protein] + tRNA(Phe). Functions in the N-end rule pathway of protein degradation where it conjugates Leu, Phe and, less efficiently, Met from aminoacyl-tRNAs to the N-termini of proteins containing an N-terminal arginine or lysine. In Alcanivorax borkumensis (strain ATCC 700651 / DSM 11573 / NCIMB 13689 / SK2), this protein is Leucyl/phenylalanyl-tRNA--protein transferase.